Reading from the N-terminus, the 375-residue chain is uncharacterized protein (375 aa).

Residues 1–2 (MR) are Cytoplasmic-facing. The helical; Signal-anchor for type II membrane protein transmembrane segment at 3-23 (WYSYVIPAVILSIIAISGVWW) threads the bilayer. The Lumenal segment spans residues 24-375 (NATLGTRLDQ…YIEQRLFPQP (352 aa)).

This sequence belongs to the glycosyltransferase 34 family.

It is found in the endoplasmic reticulum membrane. The protein resides in the golgi apparatus membrane. This is an uncharacterized protein from Schizosaccharomyces pombe (strain 972 / ATCC 24843) (Fission yeast).